Here is a 90-residue protein sequence, read N- to C-terminus: Small ribosomal subunit protein bS16 (90 aa).

The protein belongs to the bacterial ribosomal protein bS16 family.

The sequence is that of Small ribosomal subunit protein bS16 from Geobacillus sp. (strain WCH70).